A 289-amino-acid chain; its full sequence is Glycine--tRNA ligase alpha subunit (289 aa).

This sequence belongs to the class-II aminoacyl-tRNA synthetase family. As to quaternary structure, tetramer of two alpha and two beta subunits.

The protein localises to the cytoplasm. It catalyses the reaction tRNA(Gly) + glycine + ATP = glycyl-tRNA(Gly) + AMP + diphosphate. This Rickettsia felis (strain ATCC VR-1525 / URRWXCal2) (Rickettsia azadi) protein is Glycine--tRNA ligase alpha subunit.